A 160-amino-acid chain; its full sequence is uncharacterized protein (160 aa).

The first 29 residues, 1 to 29 (MCGLGIVPMVKPALFGMLILVIGTSTVQA), serve as a signal peptide directing secretion.

This is an uncharacterized protein from Sinorhizobium fredii (strain NBRC 101917 / NGR234).